The chain runs to 385 residues: FAD-dependent monooxygenase verC2 (385 aa).

Residues R27, D227, and A240 each contribute to the FAD site. N320 carries an N-linked (GlcNAc...) asparagine glycan. A helical membrane pass occupies residues 365–385 (WKTTIMFIALLTIVVLIYSFI).

The protein belongs to the paxM FAD-dependent monooxygenase family. FAD serves as cofactor.

The protein resides in the membrane. It functions in the pathway secondary metabolite biosynthesis; terpenoid biosynthesis. The protein operates within mycotoxin biosynthesis. Its function is as follows. FAD-dependent monooxygenase; part of the gene cluster that mediates the biosynthesis of the neurotoxin verrucosidin, a methylated alpha-pyrone polyketide that inhibits oxidative phosphorylation in mitochondria and thereby causes neurological diseases. The carbon backbone of verrucosidin is synthesized by the HR-PKS verA, and further modified by the other verrucodidin cluster enzymes. The protein is FAD-dependent monooxygenase verC2 of Penicillium polonicum.